A 260-amino-acid chain; its full sequence is Cytosolic Fe-S cluster assembly factor Nubp2 homolog 2 (260 aa).

Gly-14–Ser-21 lines the ATP pocket. Residues Cys-188 and Cys-191 each contribute to the [4Fe-4S] cluster site.

This sequence belongs to the Mrp/NBP35 ATP-binding proteins family. NUBP2/CFD1 subfamily. Heterotetramer of 2 Nubp1 and 2 Nubp2 chains. [4Fe-4S] cluster is required as a cofactor.

It is found in the cytoplasm. Its function is as follows. Component of the cytosolic iron-sulfur (Fe/S) protein assembly (CIA) machinery. Required for maturation of extramitochondrial Fe-S proteins. The Nubp1-Nubp2 heterotetramer forms a Fe-S scaffold complex, mediating the de novo assembly of an Fe-S cluster and its transfer to target apoproteins. This is Cytosolic Fe-S cluster assembly factor Nubp2 homolog 2 from Drosophila yakuba (Fruit fly).